An 87-amino-acid polypeptide reads, in one-letter code: Omega-theraphotoxin-Gr1a (87 aa).

The first 24 residues, 1–24 (MKAQIFVVVLGLAALSVLCYGSEA), serve as a signal peptide directing secretion. Residues 25-49 (DESALHEEIFQLLAASDEVPKPQER) constitute a propeptide that is removed on maturation. Disulfide bonds link Cys-51-Cys-65, Cys-58-Cys-70, and Cys-64-Cys-79. Val-85 bears the Valine amide mark.

As to expression, expressed by the venom gland.

It is found in the secreted. Functionally, inhibits P/Q- (Cav2.1/CACNA1A) and N-type (Cav2.2/CACNA1B) voltage-gated calcium channel by modifying voltage-dependent gating. It selectively and reversibly blocks the calcium channels coupled to glutamate release. Also inhibits potassium channels (Kv2.1/KCNB1) with lower affinity. Has also been shown to weakly inhibit Kv11.1/KCNH2/ERG1, Kv1.2/KCNA2, Kv1.3/KCNA3, Nav1.5/SCN5A, Nav1.7/SCN9A and TRPV1. The polypeptide is Omega-theraphotoxin-Gr1a (Grammostola rosea (Chilean rose tarantula)).